The primary structure comprises 208 residues: LexA repressor (208 aa).

Residues 28 to 48 (RAEIARELGFRSANAAEEHLK) constitute a DNA-binding region (H-T-H motif). Catalysis depends on for autocatalytic cleavage activity residues Ser-125 and Lys-162.

This sequence belongs to the peptidase S24 family. As to quaternary structure, homodimer.

The catalysed reaction is Hydrolysis of Ala-|-Gly bond in repressor LexA.. Functionally, represses a number of genes involved in the response to DNA damage (SOS response), including recA and lexA. In the presence of single-stranded DNA, RecA interacts with LexA causing an autocatalytic cleavage which disrupts the DNA-binding part of LexA, leading to derepression of the SOS regulon and eventually DNA repair. The sequence is that of LexA repressor from Aliivibrio fischeri (strain MJ11) (Vibrio fischeri).